The following is a 77-amino-acid chain: Small ribosomal subunit protein uS4 (77 aa).

Residues 45–77 (PFGGGRPGRVKRKNQKAAAKKASGGDGDEEDEE) form a disordered region. A compositionally biased stretch (basic residues) spans 52–63 (GRVKRKNQKAAA).

It belongs to the universal ribosomal protein uS4 family.

This is Small ribosomal subunit protein uS4 (RPS9) from Nicotiana tabacum (Common tobacco).